The sequence spans 257 residues: Adenylate kinase (257 aa).

51 to 56 (GAGKGT) contributes to the ATP binding site. The interval 71-100 (ATGDMLRSQVAKKTELGKEAKKIMDQGGLV) is NMP. Residues T72, R77, 98 to 100 (GLV), 127 to 130 (GFPR), and Q134 contribute to the AMP site. The tract at residues 168–205 (GRLVHPASGRSYHKIFNPPKQEMKDDITGEPLIQRSDD) is LID. Residues R169 and 178–179 (SY) each bind ATP. R202 and R213 together coordinate AMP. Q241 lines the ATP pocket.

The protein belongs to the adenylate kinase family. AK2 subfamily. As to quaternary structure, monomer.

It is found in the cytoplasm. The protein localises to the cytosol. It localises to the mitochondrion intermembrane space. It carries out the reaction AMP + ATP = 2 ADP. Its function is as follows. Catalyzes the reversible transfer of the terminal phosphate group between ATP and AMP. Plays an important role in cellular energy homeostasis and in adenine nucleotide metabolism. Adenylate kinase activity is critical for regulation of the phosphate utilization and the AMP de novo biosynthesis pathways. The chain is Adenylate kinase (adk1) from Aspergillus terreus (strain NIH 2624 / FGSC A1156).